The sequence spans 253 residues: Major prion protein (253 aa).

The N-terminal stretch at 1–22 (MANLGCWMLVLFVATWSDLGLC) is a signal peptide. The segment at 23-230 (KKRPKPGGWN…ESQAYYQRGS (208 aa)) is interaction with GRB2, ERI3 and SYN1. The segment at 26-108 (PKPGGWNTGG…WHKPSKPKTS (83 aa)) is disordered. Repeat copies occupy residues 51-59 (PQGGGGWGQ), 60-67 (PHGGGWGQ), 68-75 (PHGGGWGQ), 76-83 (PHGGGWGQ), and 84-91 (PHGGGWGQ). The segment at 51–91 (PQGGGGWGQPHGGGWGQPHGGGWGQPHGGGWGQPHGGGWGQ) is 5 X 8 AA tandem repeats of P-H-G-G-G-W-G-Q. A compositionally biased stretch (gly residues) spans 52–95 (QGGGGWGQPHGGGWGQPHGGGWGQPHGGGWGQPHGGGWGQGGGT). Positions 61, 62, 63, 69, 70, 71, 77, 78, 79, 85, 86, and 87 each coordinate Cu(2+). Positions 98–108 (QWHKPSKPKTS) are enriched in basic residues. An intrachain disulfide couples Cys179 to Cys214. 2 N-linked (GlcNAc...) asparagine glycosylation sites follow: Asn181 and Asn197. Ser230 carries the GPI-anchor amidated serine lipid modification. A propeptide spans 231 to 253 (SMVLFSSPPVILLISFLIFLIVG) (removed in mature form).

It belongs to the prion family. As to quaternary structure, monomer and homodimer. Has a tendency to aggregate into amyloid fibrils containing a cross-beta spine, formed by a steric zipper of superposed beta-strands. Soluble oligomers may represent an intermediate stage on the path to fibril formation. Copper binding may promote oligomerization. Interacts with GRB2, APP, ERI3/PRNPIP and SYN1. Mislocalized cytosolically exposed PrP interacts with MGRN1; this interaction alters MGRN1 subcellular location and causes lysosomal enlargement. Interacts with KIAA1191.

It localises to the cell membrane. It is found in the golgi apparatus. Its primary physiological function is unclear. Has cytoprotective activity against internal or environmental stresses. May play a role in neuronal development and synaptic plasticity. May be required for neuronal myelin sheath maintenance. May play a role in iron uptake and iron homeostasis. Soluble oligomers are toxic to cultured neuroblastoma cells and induce apoptosis (in vitro). Association with GPC1 (via its heparan sulfate chains) targets PRNP to lipid rafts. Also provides Cu(2+) or Zn(2+) for the ascorbate-mediated GPC1 deaminase degradation of its heparan sulfate side chains. The sequence is that of Major prion protein (PRNP) from Macaca fascicularis (Crab-eating macaque).